Here is a 374-residue protein sequence, read N- to C-terminus: 5-methylthioribulose-1-phosphate isomerase (374 aa).

This sequence belongs to the RuBisCO large chain family. Type IV subfamily.

It carries out the reaction 5-(methylsulfanyl)-D-ribulose 1-phosphate = S-methyl-1-thio-D-xylulose 5-phosphate. It catalyses the reaction 5-(methylsulfanyl)-D-ribulose 1-phosphate = 1-(methylsulfanyl)ribulose 5-phosphate. It participates in amino-acid biosynthesis; L-methionine biosynthesis via salvage pathway. It functions in the pathway metabolic intermediate biosynthesis; 1-deoxy-D-xylulose 5-phosphate biosynthesis. In terms of biological role, catalyzes the conversion of 5-methylthio-D-ribulose 1-phosphate (MTRu-1P) to a 3:1 mixture of 1-methylthioxylulose 5-phosphate (MTXu-5P) and 1-methylthioribulose 5-phosphate (MTRu-5P). Involved in the MTA-isoprenoid shunt of the methionine salvage pathway. The protein is 5-methylthioribulose-1-phosphate isomerase of Rhodospirillum rubrum (strain ATCC 11170 / ATH 1.1.1 / DSM 467 / LMG 4362 / NCIMB 8255 / S1).